Here is a 298-residue protein sequence, read N- to C-terminus: HTH-type transcriptional regulator ArgP (298 aa).

Positions 4 to 60 constitute an HTH lysR-type domain; that stretch reads VDYRWVAALDAVIAQRGFERAAEKLCITQSAVSQRIKQLEKLMAQPLLVREQPPRPT. The segment at residues 21 to 40 is a DNA-binding region (H-T-H motif); that stretch reads FERAAEKLCITQSAVSQRIK.

The protein belongs to the LysR transcriptional regulatory family. In terms of assembly, homodimer.

Functionally, controls the transcription of genes involved in arginine and lysine metabolism. The sequence is that of HTH-type transcriptional regulator ArgP from Photobacterium profundum (strain SS9).